Consider the following 449-residue polypeptide: Hyaluronidase (449 aa).

Positions 1–23 (MYHLWIKCLAAWIFLKRFNGVHV) are cleaved as a signal peptide. Cystine bridges form between Cys47/Cys340 and Cys211/Cys227. N-linked (GlcNAc...) asparagine glycans are attached at residues Asn67, Asn103, and Asn111. Glu135 serves as the catalytic Proton donor. Residue Asn153 is glycosylated (N-linked (GlcNAc...) asparagine). N-linked (GlcNAc...) asparagine glycosylation is present at Asn357. Disulfide bonds link Cys365/Cys376, Cys370/Cys427, and Cys429/Cys438. Residue Asn401 is glycosylated (N-linked (GlcNAc...) asparagine). The 12-residue stretch at 427-438 (CQCYQGWKGLYC) folds into the EGF-like domain.

It belongs to the glycosyl hydrolase 56 family. As to quaternary structure, monomer. Expressed by the venom gland.

The protein resides in the secreted. It catalyses the reaction Random hydrolysis of (1-&gt;4)-linkages between N-acetyl-beta-D-glucosamine and D-glucuronate residues in hyaluronate.. Its function is as follows. Snake venom endo-hyaluronidase that degrades hyaluronan to smaller oligosaccharide fragments. In venom, it is not toxic by itself, but increases the diffusion of other venom proteins by degrading the extracellular matrix. In addition, it displays antiedematogenic activity. This chain is Hyaluronidase, found in Crotalus adamanteus (Eastern diamondback rattlesnake).